A 173-amino-acid chain; its full sequence is Ribosome maturation factor RimM (173 aa).

Residues 98–170 (VGDMTWDSFI…SLTVSLPEGL (73 aa)) form the PRC barrel domain.

Belongs to the RimM family. Binds ribosomal protein uS19.

Its subcellular location is the cytoplasm. In terms of biological role, an accessory protein needed during the final step in the assembly of 30S ribosomal subunit, possibly for assembly of the head region. Essential for efficient processing of 16S rRNA. May be needed both before and after RbfA during the maturation of 16S rRNA. It has affinity for free ribosomal 30S subunits but not for 70S ribosomes. This chain is Ribosome maturation factor RimM, found in Parabacteroides distasonis (strain ATCC 8503 / DSM 20701 / CIP 104284 / JCM 5825 / NCTC 11152).